The following is a 550-amino-acid chain: Arginine--tRNA ligase (550 aa).

The 'HIGH' region motif lies at 130-140 (ANPTGPIHLGG).

Belongs to the class-I aminoacyl-tRNA synthetase family. As to quaternary structure, monomer.

The protein localises to the cytoplasm. It catalyses the reaction tRNA(Arg) + L-arginine + ATP = L-arginyl-tRNA(Arg) + AMP + diphosphate. This Rhodococcus jostii (strain RHA1) protein is Arginine--tRNA ligase.